A 550-amino-acid chain; its full sequence is Sterol O-acyltransferase 1 (550 aa).

Methionine 1 carries the post-translational modification N-acetylmethionine. The segment at 1 to 36 (MVGEEKMSLRNRLSKSRENPEEDEDQRKPAKESLEA) is disordered. The Cytoplasmic portion of the chain corresponds to 1 to 138 (MVGEEKMSLR…LDELLEVDHI (138 aa)). Phosphoserine is present on serine 8. The span at 15 to 34 (KSRENPEEDEDQRKPAKESL) shows a compositional bias: basic and acidic residues. Histidine 137 is a binding site for cholesterol. Residues 139-160 (RTIYHMFIALLILFILSTLVVD) form a helical membrane-spanning segment. Residues 161 to 180 (YIDEGRLVLEFSLLSYAFGK) lie on the Lumenal side of the membrane. A helical transmembrane segment spans residues 181–206 (FPTVVWTWWIMFLSTFSVPYFLFQRW). Topologically, residues 207–218 (ATGYSKSSHPLI) are cytoplasmic. The chain crosses the membrane as a helical span at residues 219-244 (NSLFHGFLFMVFQIGILGFGPTYVVL). Residues 245–252 (AYTLPPAS) lie on the Lumenal side of the membrane. The helical transmembrane segment at 253 to 276 (RFIIIFEQIRFVMKAHSFVRENVP) threads the bilayer. Residues 277–319 (RVLNSAKEKSSTVPIPTVNQYLYFLFAPTLIYRDSYPRNPTVR) are Cytoplasmic-facing. A helical membrane pass occupies residues 320-352 (WGYVAMQFAQVFGCFFYVYYIFERLCAPLFRNI). At 353 to 369 (KQEPFSARVLVLCVFNS) the chain is on the lumenal side. A helical transmembrane segment spans residues 370 to 395 (ILPGVLILFLTFFAFLHCWLNAFAEM). Residues 396-443 (LRFGDRMFYKDWWNSTSYSNYYRTWNVVVHDWLYYYAYKDFLWFFSKR) are Cytoplasmic-facing. The short motif at 403–409 (FYKDWWN) is the FYXDWWN motif element. An acyl-CoA is bound by residues asparagine 415, arginine 418, asparagine 421, histidine 425, tyrosine 433, lysine 445, and serine 456. A helical membrane pass occupies residues 444–468 (FKSAAMLAAFAVSAVVHEYALAVCL). The active site involves histidine 460. Over 469–474 (SFFYPV) the chain is Lumenal. A helical membrane pass occupies residues 475 to 490 (LFVLFMFFGMAFNFIV). Residues 491–496 (NDSRKK) are Cytoplasmic-facing. Residues 497-528 (PIWNVMMWTSLFLGNGVLLCFYSQEWYARQHC) traverse the membrane as a helical segment. An intrachain disulfide couples cysteine 528 to cysteine 546. Over 529 to 550 (PLKNPTFLDYVRPRSWTCRYVF) the chain is Lumenal.

It belongs to the membrane-bound acyltransferase family. Sterol o-acyltransferase subfamily. In terms of assembly, may form homo- or heterodimers. Interacts with UBIAD1. In terms of tissue distribution, expressed in most tissues, but most strongly in the adrenal gland. Expressed more strongly in liver Kupffer cells than in hepatocytes.

The protein localises to the endoplasmic reticulum membrane. It catalyses the reaction a sterol + a long-chain fatty acyl-CoA = a long-chain 3-hydroxysterol ester + CoA. The catalysed reaction is cholesterol + an acyl-CoA = a cholesterol ester + CoA. It carries out the reaction cholesterol + (9Z)-octadecenoyl-CoA = cholesteryl (9Z-octadecenoate) + CoA. The enzyme catalyses cholesterol + hexadecanoyl-CoA = cholesteryl hexadecanoate + CoA. It catalyses the reaction octadecanoyl-CoA + cholesterol = cholesteryl octadecanoate + CoA. The catalysed reaction is (9Z,12Z)-octadecadienoyl-CoA + cholesterol = cholesteryl (9Z,12Z)-octadecadienoate + CoA. It carries out the reaction (5Z,8Z,11Z,14Z)-eicosatetraenoyl-CoA + cholesterol = cholesteryl (5Z,8Z,11Z,14Z)-eicosatetraenoate + CoA. The enzyme catalyses (9Z)-hexadecenoyl-CoA + cholesterol = cholesteryl (9Z)-hexadecenoate + CoA. It catalyses the reaction (11Z)-octadecenoyl-CoA + cholesterol = cholesteryl (11Z)-octadecenoate + CoA. The catalysed reaction is (7Z)-octadecenoyl-CoA + cholesterol = cholesteryl (7Z)-octadecenoate + CoA. Its function is as follows. Catalyzes the formation of fatty acid-cholesterol esters, which are less soluble in membranes than cholesterol. Plays a role in lipoprotein assembly and dietary cholesterol absorption. Preferentially utilizes oleoyl-CoA ((9Z)-octadecenoyl-CoA) as a substrate: shows a higher activity towards an acyl-CoA substrate with a double bond at the delta-9 position (9Z) than towards saturated acyl-CoA or an unsaturated acyl-CoA with a double bond at the delta-7 (7Z) or delta-11 (11Z) positions. This chain is Sterol O-acyltransferase 1 (SOAT1), found in Macaca fascicularis (Crab-eating macaque).